A 431-amino-acid polypeptide reads, in one-letter code: Serine hydroxymethyltransferase (431 aa).

(6S)-5,6,7,8-tetrahydrofolate is bound by residues Leu126 and 130 to 132 (GHL). Position 235 is an N6-(pyridoxal phosphate)lysine (Lys235).

Belongs to the SHMT family. As to quaternary structure, homodimer. Requires pyridoxal 5'-phosphate as cofactor.

It is found in the cytoplasm. The catalysed reaction is (6R)-5,10-methylene-5,6,7,8-tetrahydrofolate + glycine + H2O = (6S)-5,6,7,8-tetrahydrofolate + L-serine. It participates in one-carbon metabolism; tetrahydrofolate interconversion. Its pathway is amino-acid biosynthesis; glycine biosynthesis; glycine from L-serine: step 1/1. In terms of biological role, catalyzes the reversible interconversion of serine and glycine with tetrahydrofolate (THF) serving as the one-carbon carrier. This reaction serves as the major source of one-carbon groups required for the biosynthesis of purines, thymidylate, methionine, and other important biomolecules. Also exhibits THF-independent aldolase activity toward beta-hydroxyamino acids, producing glycine and aldehydes, via a retro-aldol mechanism. The chain is Serine hydroxymethyltransferase from Nocardia farcinica (strain IFM 10152).